The following is a 636-amino-acid chain: 1-deoxy-D-xylulose-5-phosphate synthase (636 aa).

Residues His-74 and 115–117 (GHA) each bind thiamine diphosphate. Asp-146 serves as a coordination point for Mg(2+). Residues 147–148 (GA), Asn-175, Tyr-285, and Glu-368 each bind thiamine diphosphate. Asn-175 contacts Mg(2+).

It belongs to the transketolase family. DXPS subfamily. In terms of assembly, homodimer. Requires Mg(2+) as cofactor. Thiamine diphosphate serves as cofactor.

It catalyses the reaction D-glyceraldehyde 3-phosphate + pyruvate + H(+) = 1-deoxy-D-xylulose 5-phosphate + CO2. Its pathway is metabolic intermediate biosynthesis; 1-deoxy-D-xylulose 5-phosphate biosynthesis; 1-deoxy-D-xylulose 5-phosphate from D-glyceraldehyde 3-phosphate and pyruvate: step 1/1. In terms of biological role, catalyzes the acyloin condensation reaction between C atoms 2 and 3 of pyruvate and glyceraldehyde 3-phosphate to yield 1-deoxy-D-xylulose-5-phosphate (DXP). The polypeptide is 1-deoxy-D-xylulose-5-phosphate synthase (Anaeromyxobacter dehalogenans (strain 2CP-1 / ATCC BAA-258)).